We begin with the raw amino-acid sequence, 37 residues long: Large ribosomal subunit protein bL36 (37 aa).

This sequence belongs to the bacterial ribosomal protein bL36 family.

This Cutibacterium acnes (strain DSM 16379 / KPA171202) (Propionibacterium acnes) protein is Large ribosomal subunit protein bL36.